We begin with the raw amino-acid sequence, 487 residues long: Cysteine--tRNA ligase (487 aa).

Zn(2+) is bound at residue Cys-29. The short motif at 31 to 41 (VTVYDFCHIGH) is the 'HIGH' region element. Zn(2+) is bound by residues Cys-209, His-234, and Glu-238. The 'KMSKS' region motif lies at 266–270 (KMSKS). Lys-269 serves as a coordination point for ATP.

This sequence belongs to the class-I aminoacyl-tRNA synthetase family. Monomer. Zn(2+) is required as a cofactor.

It localises to the cytoplasm. It catalyses the reaction tRNA(Cys) + L-cysteine + ATP = L-cysteinyl-tRNA(Cys) + AMP + diphosphate. This chain is Cysteine--tRNA ligase, found in Trichlorobacter lovleyi (strain ATCC BAA-1151 / DSM 17278 / SZ) (Geobacter lovleyi).